Reading from the N-terminus, the 189-residue chain is RNA-binding protein (189 aa).

Residues 55–69 (CICPSSNHLVDDCVC) form a C4-type zinc finger. Residues 114–189 (FLTSVNPGES…DANTRKSKRK (76 aa)) form a disordered region. Residues 158 to 167 (SSSERKRKEY) show a composition bias toward basic and acidic residues. Over residues 168 to 180 (SSNSETDLSSDSD) the composition is skewed to low complexity.

It belongs to the phytoreovirus RNA-binding protein family.

The protein resides in the host cytoplasm. Functionally, constituent of viral factories. Binds to ssRNA and dsRNA. In Alopecurus aequalis (Barnyard grass), this protein is RNA-binding protein.